The primary structure comprises 351 residues: Phosphate acyltransferase (351 aa).

It belongs to the PlsX family. Homodimer. Probably interacts with PlsY.

It localises to the cytoplasm. The catalysed reaction is a fatty acyl-[ACP] + phosphate = an acyl phosphate + holo-[ACP]. Its pathway is lipid metabolism; phospholipid metabolism. Its function is as follows. Catalyzes the reversible formation of acyl-phosphate (acyl-PO(4)) from acyl-[acyl-carrier-protein] (acyl-ACP). This enzyme utilizes acyl-ACP as fatty acyl donor, but not acyl-CoA. The chain is Phosphate acyltransferase from Paramagnetospirillum magneticum (strain ATCC 700264 / AMB-1) (Magnetospirillum magneticum).